A 221-amino-acid polypeptide reads, in one-letter code: NEDD4 family-interacting protein 1 (221 aa).

At A2 the chain carries N-acetylalanine. Positions A2–P41 are interaction with UBE2L3. Residues A2 to G116 are Cytoplasmic-facing. The tract at residues G18 to S44 is disordered. 3 short sequence motifs (PPxY motif) span residues P39–Y42, P64–Y67, and P74–Y76. The tract at residues Y42–Y76 is interaction with ITCH. A helical transmembrane segment spans residues I117 to F137. The Extracellular portion of the chain corresponds to C138 to A143. A helical membrane pass occupies residues A144–V164. The Cytoplasmic portion of the chain corresponds to R165–G172. The helical transmembrane segment at Y173–L193 threads the bilayer. Residues R194–Y221 lie on the Extracellular side of the membrane.

As to quaternary structure, forms heterodimers with NDFIP2. Interacts with several E3 ubiquitin-protein ligases, including ITCH, NEDD4, NEDD4L and WWP2. The interaction with NEDD4, NEDD4L and ITCH leads to relocalization of these proteins to exosomes and eventually to exosomal secretion. Interacts with U2SURP. Interacts with SLC11A2/DMT1. Interacts with PTEN. May interact with phosphorylated EGFR. Interacts with BRAT1. Interacts with KCNH2. Interacts with MAVS. Part of a complex containing ITCH, NDFIP1 and MAP3K7. Interacts (via N-terminus) with UBE2L3; the interaction mediates recruitment of UBE2L3 to ITCH. In terms of processing, ubiquitinated by NEDD4; mono-, di- and polyubiquitinated forms are detected. Ubiquitination regulates its degradation. Undergoes transient tyrosine phosphorylation following EGF stimulation, most probably by catalyzed by SRC. Phosphorylation SRC is enhanced in the presence of NDFIP2 which may act as a scaffold to recruit SRC to NDFIP1. As to expression, highly expressed in embryonic and early postnatal cortex (at protein level). Widely expressed. Hardly detectable in resting T-cells; up-regulated in T-cells in response to activation.

It is found in the endosome membrane. It localises to the golgi apparatus membrane. Its subcellular location is the synapse. The protein resides in the synaptosome. The protein localises to the cell projection. It is found in the dendrite. It localises to the secreted. Its function is as follows. Activates HECT domain-containing E3 ubiquitin-protein ligases, including NEDD4 and ITCH, and consequently modulates the stability of their targets. As a result, controls many cellular processes. Prevents chronic T-helper cell-mediated inflammation by activating ITCH and thus controlling JUNB degradation. Promotes pancreatic beta cell death through degradation of JUNB and inhibition of the unfolded protein response, leading to reduction of insulin secretion. Restricts the production of pro-inflammatory cytokines in effector Th17 T-cells by promoting ITCH-mediated ubiquitination and degradation of RORC. Together with NDFIP2, limits the cytokine signaling and expansion of effector Th2 T-cells by promoting degradation of JAK1, probably by ITCH- and NEDD4L-mediated ubiquitination. Regulates peripheral T-cell tolerance to self and foreign antigens, forcing the exit of naive CD4+ T-cells from the cell cycle before they become effector T-cells. Negatively regulates RLR-mediated antiviral response by promoting SMURF1-mediated ubiquitination and subsequent degradation of MAVS. Negatively regulates KCNH2 potassium channel activity by decreasing its cell-surface expression and interfering with channel maturation through recruitment of NEDD4L to the Golgi apparatus where it mediates KCNH2 degradation. In cortical neurons, mediates the ubiquitination of the divalent metal transporter SLC11A2/DMT1 by NEDD4L, leading to its down-regulation and protection of the cells from cobalt and iron toxicity. Important for normal development of dendrites and dendritic spines in cortex. Enhances the ubiquitination of BRAT1 mediated by: NEDD4, NEDD4L and ITCH and is required for the nuclear localization of ubiquitinated BRAT1. Enhances the ITCH-mediated ubiquitination of MAP3K7 by recruiting E2 ubiquitin-conjugating enzyme UBE2L3 to ITCH. Modulates EGFR signaling through multiple pathways. In particular, may regulate the ratio of AKT1-to-MAPK8 signaling in response to EGF, acting on AKT1 probably through PTEN destabilization and on MAPK8 through ITCH-dependent MAP2K4 inactivation. As a result, may control cell growth rate. Inhibits cell proliferation by promoting PTEN nuclear localization and changing its signaling specificity. This is NEDD4 family-interacting protein 1 (Ndfip1) from Mus musculus (Mouse).